The primary structure comprises 454 residues: Aspartokinase 3 (454 aa).

ACT domains are found at residues 312–388 (ISKY…ALIM) and 389–454 (VVGE…VLIS).

It belongs to the aspartokinase family. In terms of assembly, monomer.

The enzyme catalyses L-aspartate + ATP = 4-phospho-L-aspartate + ADP. The protein operates within amino-acid biosynthesis; L-lysine biosynthesis via DAP pathway; (S)-tetrahydrodipicolinate from L-aspartate: step 1/4. Its pathway is amino-acid biosynthesis; L-methionine biosynthesis via de novo pathway; L-homoserine from L-aspartate: step 1/3. It participates in amino-acid biosynthesis; L-threonine biosynthesis; L-threonine from L-aspartate: step 1/5. Its function is as follows. Catalyzes the phosphorylation of the beta-carboxyl group of aspartic acid with ATP to yield 4-phospho-L-aspartate, which is involved in the branched biosynthetic pathway leading to the biosynthesis of amino acids threonine, isoleucine and methionine. This is Aspartokinase 3 (yclM) from Bacillus subtilis (strain 168).